The sequence spans 407 residues: Protein COS9 (407 aa).

Helical transmembrane passes span 75-95 (TWLLLLLLMWLPGFLSQIKSI), 98-118 (IFPFKLCILVSCLVGIFLPNI), and 261-281 (IFNLWLFPAFILFLACIYVSW).

Belongs to the DUP/COS family.

The protein resides in the membrane. This Saccharomyces cerevisiae (strain ATCC 204508 / S288c) (Baker's yeast) protein is Protein COS9 (COS9).